The chain runs to 306 residues: MKPTKELLNEILHEVRPLIGRGKVANYIPALARVPAHKLAIAVYTNQGEVIKAGDADEAFSIQSISKALSLTLAMGLYQPDEIWRRVGKEPSGQAFNSLIQLEMEQGIPRNPFINAGAIVVADLLASRLSAPRQRLLEFVRQLSGETHICYDKVVAASEMMHSDRNAAIAYLMRSFGNFENEVIPVLNNYFHACALKMSCVDLAKTFSYLANKGVSVHTDQRVISPVQTKQLNALLATCGLYDGAGEFAYRVGMPGKSGVGGGIIAIVPGEMTIAVWSPELDPSGNSLAGTKALELLSERIGRSIF.

Positions 64, 115, 159, 166, 190, 242, and 260 each coordinate substrate.

This sequence belongs to the glutaminase family. Homotetramer.

It catalyses the reaction L-glutamine + H2O = L-glutamate + NH4(+). This is Glutaminase from Vibrio vulnificus (strain YJ016).